Consider the following 387-residue polypeptide: Succinate--CoA ligase [ADP-forming] subunit beta (387 aa).

Residues 9–244 (KHILSKFGVN…YDEEIKEEIE (236 aa)) form the ATP-grasp domain. Residues Lys-46, 53–55 (GRG), Glu-99, Cys-102, and Glu-107 each bind ATP. Residues Asn-199 and Asp-213 each contribute to the Mg(2+) site. Residues Asn-264 and 321–323 (GIM) contribute to the substrate site.

It belongs to the succinate/malate CoA ligase beta subunit family. In terms of assembly, heterotetramer of two alpha and two beta subunits. The cofactor is Mg(2+).

The enzyme catalyses succinate + ATP + CoA = succinyl-CoA + ADP + phosphate. The catalysed reaction is GTP + succinate + CoA = succinyl-CoA + GDP + phosphate. It participates in carbohydrate metabolism; tricarboxylic acid cycle; succinate from succinyl-CoA (ligase route): step 1/1. Succinyl-CoA synthetase functions in the citric acid cycle (TCA), coupling the hydrolysis of succinyl-CoA to the synthesis of either ATP or GTP and thus represents the only step of substrate-level phosphorylation in the TCA. The beta subunit provides nucleotide specificity of the enzyme and binds the substrate succinate, while the binding sites for coenzyme A and phosphate are found in the alpha subunit. This is Succinate--CoA ligase [ADP-forming] subunit beta from Ehrlichia chaffeensis (strain ATCC CRL-10679 / Arkansas).